We begin with the raw amino-acid sequence, 274 residues long: 2,3,4,5-tetrahydropyridine-2,6-dicarboxylate N-succinyltransferase (274 aa).

Residues arginine 104 and aspartate 141 each contribute to the substrate site.

The protein belongs to the transferase hexapeptide repeat family. In terms of assembly, homotrimer.

It localises to the cytoplasm. It catalyses the reaction (S)-2,3,4,5-tetrahydrodipicolinate + succinyl-CoA + H2O = (S)-2-succinylamino-6-oxoheptanedioate + CoA. It functions in the pathway amino-acid biosynthesis; L-lysine biosynthesis via DAP pathway; LL-2,6-diaminopimelate from (S)-tetrahydrodipicolinate (succinylase route): step 1/3. The polypeptide is 2,3,4,5-tetrahydropyridine-2,6-dicarboxylate N-succinyltransferase (Salmonella typhi).